The primary structure comprises 253 residues: Large ribosomal subunit protein uL4 (253 aa).

The tract at residues 62 to 107 (WGSGRGVSHVPRLKNSSRAARVPHAKGGRRAHPPKPEADRSEKVNT) is disordered. The segment covering 82–94 (RVPHAKGGRRAHP) has biased composition (basic residues). Residues 95 to 107 (PKPEADRSEKVNT) are compositionally biased toward basic and acidic residues.

It belongs to the universal ribosomal protein uL4 family. In terms of assembly, part of the 50S ribosomal subunit.

In terms of biological role, one of the primary rRNA binding proteins, this protein initially binds near the 5'-end of the 23S rRNA. It is important during the early stages of 50S assembly. It makes multiple contacts with different domains of the 23S rRNA in the assembled 50S subunit and ribosome. Its function is as follows. Forms part of the polypeptide exit tunnel. This Methanosarcina mazei (strain ATCC BAA-159 / DSM 3647 / Goe1 / Go1 / JCM 11833 / OCM 88) (Methanosarcina frisia) protein is Large ribosomal subunit protein uL4.